The primary structure comprises 358 residues: Gentisate 1,2-dioxygenase (358 aa).

In terms of domain architecture, Cupin type-2 spans 99 to 165; that stretch reads QYLGPREVAP…VTDEPMAWLD (67 aa). Residues 185-215 form a disordered region; that stretch reads DELSTRETPERSRGERLWGHPGLRPIGRPDQ. The span at 187 to 202 shows a compositional bias: basic and acidic residues; the sequence is LSTRETPERSRGERLW.

This sequence belongs to the gentisate 1,2-dioxygenase family.

It carries out the reaction 2,5-dihydroxybenzoate + O2 = 3-maleylpyruvate + H(+). Functionally, involved in the degradation of salicylate via a pathway involving coenzyme A derivative. Catalyzes the oxygen-dependent ring fission of gentisate between the carboxyl and proximal hydroxyl groups at positions 1 and 2 of the aromatic ring to form maleylpyruvate. The substrate specificity is strong, since salicylate, catechol, protocatechuic acid, homogenetisate, 2,3-dihydroxybenzoate or 5-aminosalicylate cannot substitute for gentisate in the ring cleavage reaction. This Streptomyces sp protein is Gentisate 1,2-dioxygenase.